Reading from the N-terminus, the 195-residue chain is MSKQEKSNVEDKSLDIETAAQVETAQESASGALEELSVEEQLERAKDTIKELEDSCDQFKDEALRAKAEMENIRKRAERDVSNARKFGIEKFAKELLPVIDSIEQALKHEVKLEEAIAMKEGIELTAKILVDILKKNGVEELDPKGEKFDPNLHEAMAMIPNPEFEDNTIFDVFQKGYMLNGRIVRAAKVVIVKN.

It belongs to the GrpE family. Homodimer.

It is found in the cytoplasm. Functionally, participates actively in the response to hyperosmotic and heat shock by preventing the aggregation of stress-denatured proteins, in association with DnaK and GrpE. It is the nucleotide exchange factor for DnaK and may function as a thermosensor. Unfolded proteins bind initially to DnaJ; upon interaction with the DnaJ-bound protein, DnaK hydrolyzes its bound ATP, resulting in the formation of a stable complex. GrpE releases ADP from DnaK; ATP binding to DnaK triggers the release of the substrate protein, thus completing the reaction cycle. Several rounds of ATP-dependent interactions between DnaJ, DnaK and GrpE are required for fully efficient folding. This chain is Protein GrpE, found in Francisella tularensis subsp. holarctica (strain OSU18).